We begin with the raw amino-acid sequence, 314 residues long: 2,3-dihydroxyphenylpropionate/2,3-dihydroxicinnamic acid 1,2-dioxygenase 1 (314 aa).

His-115 (proton donor) is an active-site residue. His-179 acts as the Proton acceptor in catalysis.

This sequence belongs to the LigB/MhpB extradiol dioxygenase family. Homotetramer. Fe(2+) serves as cofactor.

The enzyme catalyses 3-(2,3-dihydroxyphenyl)propanoate + O2 = (2Z,4E)-2-hydroxy-6-oxonona-2,4-dienedioate + H(+). It catalyses the reaction (2E)-3-(2,3-dihydroxyphenyl)prop-2-enoate + O2 = (2Z,4E,7E)-2-hydroxy-6-oxonona-2,4,7-trienedioate + H(+). Its pathway is aromatic compound metabolism; 3-phenylpropanoate degradation. Its function is as follows. Catalyzes the non-heme iron(II)-dependent oxidative cleavage of 2,3-dihydroxyphenylpropionic acid and 2,3-dihydroxicinnamic acid into 2-hydroxy-6-ketononadienedioate and 2-hydroxy-6-ketononatrienedioate, respectively. The protein is 2,3-dihydroxyphenylpropionate/2,3-dihydroxicinnamic acid 1,2-dioxygenase 1 of Pseudomonas putida (Arthrobacter siderocapsulatus).